The chain runs to 318 residues: Fibronectin type III domain-containing protein 11 (318 aa).

The 98-residue stretch at 210–307 folds into the Fibronectin type-III domain; sequence VVFDRKASAA…DSLTLHTKPE (98 aa).

This chain is Fibronectin type III domain-containing protein 11 (FNDC11), found in Homo sapiens (Human).